Reading from the N-terminus, the 496-residue chain is Transmembrane transporter swnT (496 aa).

5 helical membrane passes run 40-60, 72-92, 124-144, 162-182, and 191-211; these read LSAI…PLIL, VFWG…TLAE, AMIS…SVPL, WMGF…ACFE, and AFLL…FAMA. Asn225 is a glycosylation site (N-linked (GlcNAc...) asparagine). 6 helical membrane passes run 270–290, 314–334, 368–388, 396–416, 434–454, and 467–487; these read LLWT…AVLV, AAAI…VWSI, PIWS…LYLA, LIAT…VLVL, GLVA…FYCF, and YVSG…ILYA.

The protein belongs to the amino acid-polyamine-organocation (APC) superfamily. Amino acid/choline transporter (ACT) (TC 2.A.3.4) family.

The protein resides in the membrane. Transmembrane transporter; part of the gene cluster that mediates the biosynthesis of swainsonine, a cytotoxic fungal alkaloid and a potential cancer therapy drug. Does not mediate the secretion of SW and the exact role of swnT in SW biosynthesis remains to be determined. The protein is Transmembrane transporter swnT of Metarhizium robertsii (strain ARSEF 23 / ATCC MYA-3075) (Metarhizium anisopliae (strain ARSEF 23)).